Consider the following 67-residue polypeptide: UPF0181 protein KPK_1966 (67 aa).

Positions 48 to 67 (EQIVARFEDEDEDQDEDEDD) are disordered. Residues 55–67 (EDEDEDQDEDEDD) are compositionally biased toward acidic residues.

The protein belongs to the UPF0181 family.

The sequence is that of UPF0181 protein KPK_1966 from Klebsiella pneumoniae (strain 342).